Consider the following 580-residue polypeptide: MSKRPISVEELIGKSQSAEVISKPKFLSKSERQKLSLQRNQEIQDKKRQQSTVNNGAKKRYNNSIEDNPEPKKINKKLKKGRNFNFDWDEEEDTSNNYQPLVRYDNRTNPPDLGLSDMHWSEKQIDDMTTRDWRIFKEDYNITSKGGDIENPLRCWAESKLPAKLLNILIKNLGYDSPTPIQRASIPLALNGRDIVGIAETGSGKTLAFLLPLFSYILSVDSNYLLYEHQQESNFNKPLGLILAPTRELALQITKEAKLFGDKLNLNVVTIIGGHQYEETVHSVRNGVHIVVATPGRLIDSLERGIINLSNCYFFTMDEADKMIDMGFEKSLQSILNYLPASEKLETTIDGKIFNIKKRITLMFTATISPPIEKITKNYLMKPGYLFIGNVGEAVDNINQQFEYFGARQSSDEILDPKKLDKLFSILRFHKDENRNYSIIIFANFKKACEELAYELSRKGFSDNTVIHGSKSQEARERAIDSFREGKDKILIATDVAARGIDIPNVSLVVNYQMTKKFDEYIHRIGRTGRAGNKGTSCTFIDDGDSEVFLDLKKFLNKGKKKCPEWLLKHSSTQSQILRD.

The segment at 23 to 75 is disordered; sequence KPKFLSKSERQKLSLQRNQEIQDKKRQQSTVNNGAKKRYNNSIEDNPEPKKIN. A Q motif motif is present at residues 154–183; it reads RCWAESKLPAKLLNILIKNLGYDSPTPIQR. The Helicase ATP-binding domain maps to 186–386; sequence IPLALNGRDI…KNYLMKPGYL (201 aa). 199-206 serves as a coordination point for ATP; the sequence is AETGSGKT. The DEAD box signature appears at 318 to 321; the sequence is DEAD. Positions 422-571 constitute a Helicase C-terminal domain; the sequence is KLFSILRFHK…KCPEWLLKHS (150 aa).

It belongs to the DEAD box helicase family. DDX23/PRP28 subfamily. Component of the U5 snRNP complex.

It localises to the cytoplasm. Its subcellular location is the nucleus. It carries out the reaction ATP + H2O = ADP + phosphate + H(+). In terms of biological role, ATP-dependent RNA helicase involved in mRNA splicing. May destabilize the U1/5'-splice site duplex to permit an effective competition for the 5'-splice site by the U6 snRNA, resulting in the switch between U1 and U6 at the 5'-splice site. May also act to unwind the U4/U6 base-pairing interaction in the U4/U6/U5 snRNP, facilitating the first covalent step of splicing. This is Pre-mRNA-splicing ATP-dependent RNA helicase PRP28 (PRP28) from Debaryomyces hansenii (strain ATCC 36239 / CBS 767 / BCRC 21394 / JCM 1990 / NBRC 0083 / IGC 2968) (Yeast).